A 133-amino-acid polypeptide reads, in one-letter code: Small ribosomal subunit protein uS15 (133 aa).

This sequence belongs to the universal ribosomal protein uS15 family. In terms of assembly, part of the 30S ribosomal subunit.

In Methanosphaera stadtmanae (strain ATCC 43021 / DSM 3091 / JCM 11832 / MCB-3), this protein is Small ribosomal subunit protein uS15.